Here is a 183-residue protein sequence, read N- to C-terminus: Adenine phosphoribosyltransferase (183 aa).

The protein belongs to the purine/pyrimidine phosphoribosyltransferase family. In terms of assembly, homodimer.

The protein localises to the cytoplasm. The catalysed reaction is AMP + diphosphate = 5-phospho-alpha-D-ribose 1-diphosphate + adenine. Its pathway is purine metabolism; AMP biosynthesis via salvage pathway; AMP from adenine: step 1/1. Functionally, catalyzes a salvage reaction resulting in the formation of AMP, that is energically less costly than de novo synthesis. The protein is Adenine phosphoribosyltransferase of Erwinia tasmaniensis (strain DSM 17950 / CFBP 7177 / CIP 109463 / NCPPB 4357 / Et1/99).